We begin with the raw amino-acid sequence, 589 residues long: Sulfite reductase [NADPH] hemoprotein beta-component (589 aa).

[4Fe-4S] cluster contacts are provided by Cys443, Cys449, Cys488, and Cys492. Cys492 is a binding site for siroheme.

The protein belongs to the nitrite and sulfite reductase 4Fe-4S domain family. Alpha(8)-beta(8). The alpha component is a flavoprotein, the beta component is a hemoprotein. The cofactor is siroheme. [4Fe-4S] cluster serves as cofactor.

It catalyses the reaction hydrogen sulfide + 3 NADP(+) + 3 H2O = sulfite + 3 NADPH + 4 H(+). It participates in sulfur metabolism; hydrogen sulfide biosynthesis; hydrogen sulfide from sulfite (NADPH route): step 1/1. Its function is as follows. Component of the sulfite reductase complex that catalyzes the 6-electron reduction of sulfite to sulfide. This is one of several activities required for the biosynthesis of L-cysteine from sulfate. The polypeptide is Sulfite reductase [NADPH] hemoprotein beta-component (Neisseria meningitidis serogroup C / serotype 2a (strain ATCC 700532 / DSM 15464 / FAM18)).